We begin with the raw amino-acid sequence, 459 residues long: Argininosuccinate lyase (459 aa).

It belongs to the lyase 1 family. Argininosuccinate lyase subfamily.

The protein resides in the cytoplasm. It carries out the reaction 2-(N(omega)-L-arginino)succinate = fumarate + L-arginine. Its pathway is amino-acid biosynthesis; L-arginine biosynthesis; L-arginine from L-ornithine and carbamoyl phosphate: step 3/3. In Staphylococcus aureus (strain USA300), this protein is Argininosuccinate lyase.